We begin with the raw amino-acid sequence, 170 residues long: Acetyl-CoA decarbonylase/synthase complex subunit epsilon 1 (170 aa).

This sequence belongs to the CdhB family. In terms of assembly, heterotetramer of two alpha and two epsilon subunits. The ACDS complex is made up of alpha, epsilon, beta, gamma and delta subunits with a probable stoichiometry of (alpha(2)epsilon(2))(4)-beta(8)-(gamma(1)delta(1))(8).

It functions in the pathway one-carbon metabolism; methanogenesis from acetate. In terms of biological role, part of a complex that catalyzes the reversible cleavage of acetyl-CoA, allowing growth on acetate as sole source of carbon and energy. The alpha-epsilon subcomponent functions as a carbon monoxide dehydrogenase. The precise role of the epsilon subunit is unclear; it may have a stabilizing role within the alpha(2)epsilon(2) component and/or be involved in electron transfer to FAD during a potential FAD-mediated CO oxidation. The polypeptide is Acetyl-CoA decarbonylase/synthase complex subunit epsilon 1 (Methanosarcina barkeri (strain Fusaro / DSM 804)).